Here is an 89-residue protein sequence, read N- to C-terminus: Small ribosomal subunit protein uS17 (89 aa).

Belongs to the universal ribosomal protein uS17 family. In terms of assembly, part of the 30S ribosomal subunit.

Its function is as follows. One of the primary rRNA binding proteins, it binds specifically to the 5'-end of 16S ribosomal RNA. The chain is Small ribosomal subunit protein uS17 from Bdellovibrio bacteriovorus (strain ATCC 15356 / DSM 50701 / NCIMB 9529 / HD100).